The chain runs to 424 residues: MKGRVRIRGIYATALTSIFSSLSYEIVQQSVEIAERFMREVNNLPADITIKDFEYDRGKIIVMGNGTIEEDLHDVFKYSFHWKSPIKLYSVIEADESCTYGNFKVEPCLEEGIVIKPPYDGKIVLSETKAVSKYAMVWRGKGVTTFSEHINNEEERLRLLTLSSPLNRKGYNVKWRSNAKYATLNELKEDLERLVLRYENREFRDQGEDFYLITLSLPDKLHLDEVRKSIVNTVKYHHLLKLSYNREVDSLEKDKEGSPVKLLEALISDFMKIEHIKADGKAIYLRGGKVIEKEVNNDGYRITLRREINGNGVLDGIGKRIENGDYDIVEYNSDKWYQIHRYYSGIDNSLKGIYINISTPPELLKGKIRYLDLEIDIAIRDSEIIVLDEDELNKKSIYMYSSLVNKAKEVANYLIDCIQQNKLI.

The protein belongs to the FAU-1 family.

Its function is as follows. Probable RNase involved in rRNA stability through maturation and/or degradation of precursor rRNAs. Binds to RNA in loop regions with AU-rich sequences. In Saccharolobus islandicus (strain Y.G.57.14 / Yellowstone #1) (Sulfolobus islandicus), this protein is Probable ribonuclease FAU-1.